A 182-amino-acid chain; its full sequence is Troponin I, fast skeletal muscle (182 aa).

Residue G2 is modified to N-acetylglycine. An involved in binding TNC region spans residues 2 to 48; sequence GDEEKRNRAITARRQHLKSVMLQIAATELEKEESRRESEKENYLSEH. T12 is modified (phosphothreonine). Basic and acidic residues predominate over residues 29 to 45; it reads ELEKEESRRESEKENYL. Positions 29–53 are disordered; the sequence is ELEKEESRRESEKENYLSEHCPPLH. The segment at 97 to 117 is involved in binding TNC and actin; sequence NQKLFDLRGKFKRPPLRRVRM. Position 118 is a phosphoserine (S118).

It belongs to the troponin I family. Binds to actin and tropomyosin.

Functionally, troponin I is the inhibitory subunit of troponin, the thin filament regulatory complex which confers calcium-sensitivity to striated muscle actomyosin ATPase activity. The chain is Troponin I, fast skeletal muscle (Tnni2) from Mus musculus (Mouse).